The following is a 555-amino-acid chain: CTP synthase (555 aa).

Residues 1–267 are amidoligase domain; that stretch reads MAKYIFVTGG…GNYLTLRLGL (267 aa). Residue Ser-13 participates in CTP binding. Residue Ser-13 coordinates UTP. Residue 14–19 coordinates ATP; that stretch reads SVGKGI. Tyr-54 contacts L-glutamine. Asp-71 is an ATP binding site. Asp-71 and Glu-141 together coordinate Mg(2+). Residues 148-150, 188-193, and Lys-224 contribute to the CTP site; these read DIE and KTKPTQ. UTP contacts are provided by residues 188–193 and Lys-224; that span reads KTKPTQ. The region spanning 292 to 535 is the Glutamine amidotransferase type-1 domain; sequence AIALVGKYVE…IAAAAQTFRE (244 aa). Residue Gly-354 participates in L-glutamine binding. The active-site Nucleophile; for glutamine hydrolysis is the Cys-381. Residues 382–385, Glu-406, and Arg-463 contribute to the L-glutamine site; that span reads LGMQ. Residues His-508 and Glu-510 contribute to the active site.

Belongs to the CTP synthase family. Homotetramer.

It carries out the reaction UTP + L-glutamine + ATP + H2O = CTP + L-glutamate + ADP + phosphate + 2 H(+). The catalysed reaction is L-glutamine + H2O = L-glutamate + NH4(+). The enzyme catalyses UTP + NH4(+) + ATP = CTP + ADP + phosphate + 2 H(+). The protein operates within pyrimidine metabolism; CTP biosynthesis via de novo pathway; CTP from UDP: step 2/2. Its activity is regulated as follows. Allosterically activated by GTP, when glutamine is the substrate; GTP has no effect on the reaction when ammonia is the substrate. The allosteric effector GTP functions by stabilizing the protein conformation that binds the tetrahedral intermediate(s) formed during glutamine hydrolysis. Inhibited by the product CTP, via allosteric rather than competitive inhibition. In terms of biological role, catalyzes the ATP-dependent amination of UTP to CTP with either L-glutamine or ammonia as the source of nitrogen. Regulates intracellular CTP levels through interactions with the four ribonucleotide triphosphates. The sequence is that of CTP synthase from Roseiflexus castenholzii (strain DSM 13941 / HLO8).